Here is a 391-residue protein sequence, read N- to C-terminus: Mannose-6-phosphate isomerase (391 aa).

Residues Gln-97, His-99, Glu-134, and His-255 each coordinate Zn(2+). Residue Arg-274 is part of the active site.

Belongs to the mannose-6-phosphate isomerase type 1 family. Requires Zn(2+) as cofactor.

Its subcellular location is the cytoplasm. It carries out the reaction D-mannose 6-phosphate = D-fructose 6-phosphate. Its function is as follows. Involved in the conversion of glucose to GDP-L-fucose, which can be converted to L-fucose, a capsular polysaccharide. The protein is Mannose-6-phosphate isomerase (manA) of Salmonella typhimurium (strain LT2 / SGSC1412 / ATCC 700720).